A 647-amino-acid polypeptide reads, in one-letter code: Threonine--tRNA ligase (647 aa).

The region spanning 1-61 is the TGS domain; sequence MIKITFPDGA…EEDGSIEIVT (61 aa). Residues 240–538 form a catalytic region; that stretch reads DHRKLGKELD…LIETYKGAFP (299 aa). Residues cysteine 334, histidine 385, and histidine 515 each contribute to the Zn(2+) site.

This sequence belongs to the class-II aminoacyl-tRNA synthetase family. As to quaternary structure, homodimer. Zn(2+) serves as cofactor.

The protein resides in the cytoplasm. It carries out the reaction tRNA(Thr) + L-threonine + ATP = L-threonyl-tRNA(Thr) + AMP + diphosphate + H(+). Its function is as follows. Catalyzes the attachment of threonine to tRNA(Thr) in a two-step reaction: L-threonine is first activated by ATP to form Thr-AMP and then transferred to the acceptor end of tRNA(Thr). Also edits incorrectly charged L-seryl-tRNA(Thr). The protein is Threonine--tRNA ligase of Streptococcus pyogenes serotype M18 (strain MGAS8232).